The primary structure comprises 416 residues: Tryptophan synthase beta chain (416 aa).

Lys-98 is subject to N6-(pyridoxal phosphate)lysine.

Belongs to the TrpB family. As to quaternary structure, tetramer of two alpha and two beta chains. Pyridoxal 5'-phosphate serves as cofactor.

The catalysed reaction is (1S,2R)-1-C-(indol-3-yl)glycerol 3-phosphate + L-serine = D-glyceraldehyde 3-phosphate + L-tryptophan + H2O. Its pathway is amino-acid biosynthesis; L-tryptophan biosynthesis; L-tryptophan from chorismate: step 5/5. The beta subunit is responsible for the synthesis of L-tryptophan from indole and L-serine. The sequence is that of Tryptophan synthase beta chain from Ruegeria pomeroyi (strain ATCC 700808 / DSM 15171 / DSS-3) (Silicibacter pomeroyi).